Consider the following 232-residue polypeptide: EEF1A lysine methyltransferase 3 (232 aa).

Residues Trp-57, 83 to 85 (GAG), Asp-104, Trp-133, and Ala-150 each bind S-adenosyl-L-methionine.

Belongs to the methyltransferase superfamily. METTL21 family. As to quaternary structure, interacts with members of the heat shock protein 70 and 90 families and of the TCP-1 chaperonin family, as well as with HSPD1, STIP1 and tubulin; at least some of these proteins may be methylation substrates.

The protein localises to the cytoplasm. Its subcellular location is the cytoskeleton. The protein resides in the microtubule organizing center. It localises to the centrosome. It carries out the reaction L-lysyl-[protein] + 3 S-adenosyl-L-methionine = N(6),N(6),N(6)-trimethyl-L-lysyl-[protein] + 3 S-adenosyl-L-homocysteine + 3 H(+). The enzyme catalyses L-lysyl-[protein] + S-adenosyl-L-methionine = N(6)-methyl-L-lysyl-[protein] + S-adenosyl-L-homocysteine + H(+). It catalyses the reaction N(6)-methyl-L-lysyl-[protein] + S-adenosyl-L-methionine = N(6),N(6)-dimethyl-L-lysyl-[protein] + S-adenosyl-L-homocysteine + H(+). The catalysed reaction is N(6),N(6)-dimethyl-L-lysyl-[protein] + S-adenosyl-L-methionine = N(6),N(6),N(6)-trimethyl-L-lysyl-[protein] + S-adenosyl-L-homocysteine + H(+). In terms of biological role, protein-lysine methyltransferase that selectively mono-, di- and trimethylates 'Lys-165' of the translation elongation factors EEF1A1 and EEF1A2 in an aminoacyl-tRNA and GTP-dependent manner. EEF1A1 methylation by EEF1AKMT3 is dynamic as well as inducible by stress conditions, such as ER-stress, and plays a regulatory role on mRNA translation. The chain is EEF1A lysine methyltransferase 3 from Mus musculus (Mouse).